Consider the following 321-residue polypeptide: uncharacterized protein (321 aa).

Residues 1–6 (MDIIRK) are Extracellular-facing. A helical membrane pass occupies residues 7–29 (ISHFAGQTFGIWVIVFAVLGFSF). Topologically, residues 30-34 (PSLFT) are cytoplasmic. A helical membrane pass occupies residues 35–57 (WISSYITIFLGIIMFGMGLTLQA). The Extracellular segment spans residues 58–69 (DDFKELVRKPWQ). A helical membrane pass occupies residues 70–92 (VIIGVIAQYTIMPLVAFGLAFGL). Residues 93 to 97 (HLPAE) are Cytoplasmic-facing. Residues 98–120 (IAVGVILVGCCPGGTASNVMTFL) traverse the membrane as a helical segment. Topologically, residues 121 to 129 (AKGNTALSV) are extracellular. The chain crosses the membrane as a helical span at residues 130–150 (AVTTISTLLAPVVTPLLIMLF). At 151-159 (AKEWLPVSP) the chain is on the cytoplasmic side. Residues 160–180 (GSLFISILQAVLFPIIAGLIV) traverse the membrane as a helical segment. At 181 to 190 (KMFFRKQVAK) the chain is on the extracellular side. The chain crosses the membrane as a helical span at residues 191–211 (AVHALPLVSVIGIVAIVSAVV). The Cytoplasmic portion of the chain corresponds to 212-221 (SGNRENLLQS). The helical transmembrane segment at 222–242 (GLLIFSVVILHNGIGYLLGFL) threads the bilayer. At 243–267 (CAKLLKMDYPSQKAIAIEVGMQNSG) the chain is on the extracellular side. A helical membrane pass occupies residues 268–288 (LGAALATAHFSPLSAVPSAIF). Residues 289–321 (SVWHNLSGSMLATYWSKKVKKKQAGSKSSNLSL) lie on the Cytoplasmic side of the membrane.

It belongs to the bile acid:sodium symporter (BASS) (TC 2.A.28) family.

The protein localises to the cell membrane. This is an uncharacterized protein from Bacillus subtilis (strain 168).